The chain runs to 290 residues: Ribosomal RNA small subunit methyltransferase A (290 aa).

S-adenosyl-L-methionine contacts are provided by N27, L29, G54, E75, D100, and N125.

It belongs to the class I-like SAM-binding methyltransferase superfamily. rRNA adenine N(6)-methyltransferase family. RsmA subfamily.

It is found in the cytoplasm. It catalyses the reaction adenosine(1518)/adenosine(1519) in 16S rRNA + 4 S-adenosyl-L-methionine = N(6)-dimethyladenosine(1518)/N(6)-dimethyladenosine(1519) in 16S rRNA + 4 S-adenosyl-L-homocysteine + 4 H(+). Its function is as follows. Specifically dimethylates two adjacent adenosines (A1518 and A1519) in the loop of a conserved hairpin near the 3'-end of 16S rRNA in the 30S particle. May play a critical role in biogenesis of 30S subunits. This Streptococcus thermophilus (strain ATCC BAA-491 / LMD-9) protein is Ribosomal RNA small subunit methyltransferase A.